Here is a 115-residue protein sequence, read N- to C-terminus: U3-lycotoxin-Ls1a (115 aa).

Residues 1–20 form the signal peptide; it reads MKFVLLFGVLLVTLFSYSSA. A propeptide spanning residues 21 to 44 is cleaved from the precursor; it reads EMLDDFDQADEEELLSLIEKEEAR. Disulfide bonds link Cys48–Cys63, Cys55–Cys72, Cys62–Cys87, and Cys74–Cys85.

The protein belongs to the neurotoxin 19 (CSTX) family. 01 subfamily. As to expression, expressed by the venom gland.

Its subcellular location is the secreted. The sequence is that of U3-lycotoxin-Ls1a from Lycosa singoriensis (Wolf spider).